Reading from the N-terminus, the 499-residue chain is Importin subunit alpha-8 (499 aa).

The IBB domain maps to 1-57 (MATSKAPKERLKNYKYRGKEMSLPRQQRIASSLQLRKTRKDEQVLKRRNIDLFSSDM). ARM repeat units follow at residues 101-141 (TPPL…NIAS), 144-183 (SEQT…NIAG), 186-226 (AEFR…NLCR), 229-268 (DPYP…YLTK), 271-310 (KEYI…NIVA), 313-352 (DEQT…NVAA), 354-393 (PRHQ…NIAT), and 397-436 (QDQL…YLLQ).

This sequence belongs to the importin alpha family. Binds to importin subunit beta-1/KPNB1 via the IBB domain; this complex dissociates in the presence of RAN-GTP. Shows a limited binding to the RB1 nuclear localization signal (NLS), but not to the SV40, nor NPM1 NLSs. Interacts with RSL1D1. As to expression, expressed predominantly in ovary. Isoform 1 is the predominant form.

It localises to the nucleus. Functions in nuclear protein import. In Mus musculus (Mouse), this protein is Importin subunit alpha-8 (Kpna7).